Here is a 476-residue protein sequence, read N- to C-terminus: Ribulose bisphosphate carboxylase large chain (476 aa).

Substrate contacts are provided by asparagine 116 and threonine 166. The active-site Proton acceptor is the lysine 168. Substrate is bound at residue lysine 170. The Mg(2+) site is built by lysine 194, aspartate 196, and glutamate 197. Residue lysine 194 is modified to N6-carboxylysine. The Proton acceptor role is filled by histidine 286. Substrate is bound by residues arginine 287, histidine 319, and serine 371.

Belongs to the RuBisCO large chain family. Type I subfamily. In terms of assembly, heterohexadecamer of 8 large chains and 8 small chains. It depends on Mg(2+) as a cofactor.

The catalysed reaction is 2 (2R)-3-phosphoglycerate + 2 H(+) = D-ribulose 1,5-bisphosphate + CO2 + H2O. It carries out the reaction D-ribulose 1,5-bisphosphate + O2 = 2-phosphoglycolate + (2R)-3-phosphoglycerate + 2 H(+). Functionally, ruBisCO catalyzes two reactions: the carboxylation of D-ribulose 1,5-bisphosphate, the primary event in carbon dioxide fixation, as well as the oxidative fragmentation of the pentose substrate. Both reactions occur simultaneously and in competition at the same active site. In Pseudonocardia dioxanivorans (strain ATCC 55486 / DSM 44775 / JCM 13855 / CB1190), this protein is Ribulose bisphosphate carboxylase large chain.